The sequence spans 319 residues: Acetyl-coenzyme A carboxylase carboxyl transferase subunit alpha (319 aa).

Positions 35-296 (DLDKEIEQLE…KATLLRQLED (262 aa)) constitute a CoA carboxyltransferase C-terminal domain.

Belongs to the AccA family. As to quaternary structure, acetyl-CoA carboxylase is a heterohexamer composed of biotin carboxyl carrier protein (AccB), biotin carboxylase (AccC) and two subunits each of ACCase subunit alpha (AccA) and ACCase subunit beta (AccD).

The protein localises to the cytoplasm. It catalyses the reaction N(6)-carboxybiotinyl-L-lysyl-[protein] + acetyl-CoA = N(6)-biotinyl-L-lysyl-[protein] + malonyl-CoA. Its pathway is lipid metabolism; malonyl-CoA biosynthesis; malonyl-CoA from acetyl-CoA: step 1/1. Its function is as follows. Component of the acetyl coenzyme A carboxylase (ACC) complex. First, biotin carboxylase catalyzes the carboxylation of biotin on its carrier protein (BCCP) and then the CO(2) group is transferred by the carboxyltransferase to acetyl-CoA to form malonyl-CoA. In Vibrio parahaemolyticus serotype O3:K6 (strain RIMD 2210633), this protein is Acetyl-coenzyme A carboxylase carboxyl transferase subunit alpha.